The chain runs to 397 residues: Putative efflux system protein YvrP (397 aa).

The chain crosses the membrane as a helical span at residues 8 to 28; that stretch reads LIGGAICAGVLVLAGIGAGGF. A coiled-coil region spans residues 106–183; sequence EDHSDEVEQA…KELAGLTKNK (78 aa).

This sequence belongs to the membrane fusion protein (MFP) (TC 8.A.1) family.

It localises to the cell membrane. This Bacillus subtilis (strain 168) protein is Putative efflux system protein YvrP (yvrP).